Reading from the N-terminus, the 73-residue chain is Carboxysome shell vertex protein CsoS4B (73 aa).

Residues 1–68 enclose the BMV domain; sequence MVCTQRVAGL…TDLTIGGIID (68 aa).

This sequence belongs to the CcmL/EutN family. CsoS4 subfamily. Homopentamer.

Its subcellular location is the carboxysome. In terms of biological role, probably forms vertices in the carboxysome, a polyhedral inclusion where RuBisCO (ribulose bisphosphate carboxylase, cbbL-cbbS) is sequestered. Has been modeled to induce curvature upon insertion into an otherwise flat hexagonal layer of major carboxysome subunits. Has not been identified in purified carboxysomes; it is expected to be present in very low amounts. The polypeptide is Carboxysome shell vertex protein CsoS4B (Prochlorococcus marinus subsp. pastoris (strain CCMP1986 / NIES-2087 / MED4)).